The sequence spans 301 residues: Tyrosine recombinase XerD (301 aa).

Positions 7 to 90 (QFHTTILEQF…ALKVFFLFLK (84 aa)) constitute a Core-binding (CB) domain. A Tyr recombinase domain is found at 109-294 (RLPSVLTPQE…AADSLIEKFL (186 aa)). Active-site residues include R153, K175, H246, R249, and H272. Y281 (O-(3'-phospho-DNA)-tyrosine intermediate) is an active-site residue.

Belongs to the 'phage' integrase family. XerD subfamily. As to quaternary structure, forms a cyclic heterotetrameric complex composed of two molecules of XerC and two molecules of XerD.

The protein resides in the cytoplasm. Its function is as follows. Site-specific tyrosine recombinase, which acts by catalyzing the cutting and rejoining of the recombining DNA molecules. The XerC-XerD complex is essential to convert dimers of the bacterial chromosome into monomers to permit their segregation at cell division. It also contributes to the segregational stability of plasmids. The sequence is that of Tyrosine recombinase XerD from Chlamydia pneumoniae (Chlamydophila pneumoniae).